The chain runs to 70 residues: Sec-independent protein translocase protein TatA (70 aa).

Residues 1-21 (MGSFSIWHWLIVLVVVALLFG) traverse the membrane as a helical segment. Residues 45–70 (KGESEQAEDETAKPLPKERDKDSARG) are disordered.

The protein belongs to the TatA/E family. In terms of assembly, the Tat system comprises two distinct complexes: a TatABC complex, containing multiple copies of TatA, TatB and TatC subunits, and a separate TatA complex, containing only TatA subunits. Substrates initially bind to the TatABC complex, which probably triggers association of the separate TatA complex to form the active translocon.

The protein resides in the cell inner membrane. Its function is as follows. Part of the twin-arginine translocation (Tat) system that transports large folded proteins containing a characteristic twin-arginine motif in their signal peptide across membranes. TatA could form the protein-conducting channel of the Tat system. This Phenylobacterium zucineum (strain HLK1) protein is Sec-independent protein translocase protein TatA.